The sequence spans 253 residues: 5'-nucleotidase SurE (253 aa).

A divalent metal cation contacts are provided by D8, D9, S40, and N97.

It belongs to the SurE nucleotidase family. Requires a divalent metal cation as cofactor.

Its subcellular location is the cytoplasm. It carries out the reaction a ribonucleoside 5'-phosphate + H2O = a ribonucleoside + phosphate. Functionally, nucleotidase that shows phosphatase activity on nucleoside 5'-monophosphates. The sequence is that of 5'-nucleotidase SurE from Desulforamulus reducens (strain ATCC BAA-1160 / DSM 100696 / MI-1) (Desulfotomaculum reducens).